Reading from the N-terminus, the 739-residue chain is Phosphoribosylformylglycinamidine synthase subunit PurL (739 aa).

The active site involves H55. The ATP site is built by Y58 and K97. E99 serves as a coordination point for Mg(2+). Substrate contacts are provided by residues 100 to 103 and R122; that span reads SHNH. Catalysis depends on H101, which acts as the Proton acceptor. D123 is a binding site for Mg(2+). Q246 is a binding site for substrate. Mg(2+) is bound at residue D276. 320–322 contacts substrate; sequence ESQ. Residues D502 and G539 each coordinate ATP. N540 serves as a coordination point for Mg(2+). A substrate-binding site is contributed by S542.

It belongs to the FGAMS family. In terms of assembly, monomer. Part of the FGAM synthase complex composed of 1 PurL, 1 PurQ and 2 PurS subunits.

The protein localises to the cytoplasm. The enzyme catalyses N(2)-formyl-N(1)-(5-phospho-beta-D-ribosyl)glycinamide + L-glutamine + ATP + H2O = 2-formamido-N(1)-(5-O-phospho-beta-D-ribosyl)acetamidine + L-glutamate + ADP + phosphate + H(+). Its pathway is purine metabolism; IMP biosynthesis via de novo pathway; 5-amino-1-(5-phospho-D-ribosyl)imidazole from N(2)-formyl-N(1)-(5-phospho-D-ribosyl)glycinamide: step 1/2. In terms of biological role, part of the phosphoribosylformylglycinamidine synthase complex involved in the purines biosynthetic pathway. Catalyzes the ATP-dependent conversion of formylglycinamide ribonucleotide (FGAR) and glutamine to yield formylglycinamidine ribonucleotide (FGAM) and glutamate. The FGAM synthase complex is composed of three subunits. PurQ produces an ammonia molecule by converting glutamine to glutamate. PurL transfers the ammonia molecule to FGAR to form FGAM in an ATP-dependent manner. PurS interacts with PurQ and PurL and is thought to assist in the transfer of the ammonia molecule from PurQ to PurL. In Lactiplantibacillus plantarum (strain ATCC BAA-793 / NCIMB 8826 / WCFS1) (Lactobacillus plantarum), this protein is Phosphoribosylformylglycinamidine synthase subunit PurL.